A 245-amino-acid chain; its full sequence is Orotidine 5'-phosphate decarboxylase (245 aa).

Residues aspartate 22, lysine 44, 71-80 (DLKFHDIPNT), threonine 131, arginine 192, glutamine 201, glycine 221, and arginine 222 each bind substrate. Lysine 73 (proton donor) is an active-site residue.

This sequence belongs to the OMP decarboxylase family. Type 1 subfamily. In terms of assembly, homodimer.

It carries out the reaction orotidine 5'-phosphate + H(+) = UMP + CO2. Its pathway is pyrimidine metabolism; UMP biosynthesis via de novo pathway; UMP from orotate: step 2/2. Catalyzes the decarboxylation of orotidine 5'-monophosphate (OMP) to uridine 5'-monophosphate (UMP). The polypeptide is Orotidine 5'-phosphate decarboxylase (Escherichia coli O157:H7).